A 378-amino-acid chain; its full sequence is UPF0754 membrane protein BcerKBAB4_0766 (378 aa).

2 helical membrane-spanning segments follow: residues 1–21 (MNIW…GGYT) and 357–377 (YLGA…LLFL).

The protein belongs to the UPF0754 family.

The protein localises to the cell membrane. In Bacillus mycoides (strain KBAB4) (Bacillus weihenstephanensis), this protein is UPF0754 membrane protein BcerKBAB4_0766.